We begin with the raw amino-acid sequence, 76 residues long: MKRERGRRPRKRVCSFCVDKVESIDYKDTHKIRKYITERGKILPRRISGNCAKHQRQVTVAIKRARHIALLPYIVE.

It belongs to the bacterial ribosomal protein bS18 family. As to quaternary structure, part of the 30S ribosomal subunit. Forms a tight heterodimer with protein bS6.

Binds as a heterodimer with protein bS6 to the central domain of the 16S rRNA, where it helps stabilize the platform of the 30S subunit. This Desulfitobacterium hafniense (strain Y51) protein is Small ribosomal subunit protein bS18.